We begin with the raw amino-acid sequence, 597 residues long: Probable translation initiation factor IF-2 (597 aa).

Positions 10–226 (LRTPIVAVLG…LMGLSQRFMK (217 aa)) constitute a tr-type G domain. The interval 19–26 (GHVDHGKT) is G1. Position 19-26 (19-26 (GHVDHGKT)) interacts with GTP. A G2 region spans residues 44–48 (AITQH). Positions 81 to 84 (DTPG) are G3. GTP is bound by residues 81-85 (DTPGH) and 135-138 (NKVD). The tract at residues 135-138 (NKVD) is G4. Positions 203–205 (SAI) are G5.

This sequence belongs to the TRAFAC class translation factor GTPase superfamily. Classic translation factor GTPase family. IF-2 subfamily.

In terms of biological role, function in general translation initiation by promoting the binding of the formylmethionine-tRNA to ribosomes. Seems to function along with eIF-2. The sequence is that of Probable translation initiation factor IF-2 from Halorubrum lacusprofundi (strain ATCC 49239 / DSM 5036 / JCM 8891 / ACAM 34).